The primary structure comprises 530 residues: PC4 and SFRS1-interacting protein (530 aa).

The PWWP domain occupies 1-64 (MTRDFKPGDL…PKDIFPYSEN (64 aa)). A Glycyl lysine isopeptide (Lys-Gly) (interchain with G-Cter in SUMO2) cross-link involves residue Lys-75. The interval 86-349 (NNPKVKFSSQ…VEKKRETSMD (264 aa)) is disordered. A compositionally biased stretch (polar residues) spans 92-104 (FSSQQASTKQSNA). A phosphoserine mark is found at Ser-102, Ser-105, and Ser-106. Positions 113–135 (KETSVSKEDTDHEEKASNEDVTK) are enriched in basic and acidic residues. A phosphothreonine mark is found at Thr-115 and Thr-122. At Ser-129 the chain carries Phosphoserine. A Phosphothreonine modification is found at Thr-141. The segment covering 144–153 (AARRGRKRKA) has biased composition (basic residues). Residues 146–156 (RRGRKRKAEKQ) carry the Nuclear localization signal motif. Thr-167 bears the Phosphothreonine mark. Phosphoserine occurs at positions 177 and 206. Positions 213–261 (EEDKSKKKGQEEKQPKKQLKKDEEGQKEEDKPRKEPDKKEGKKEVESKR) are enriched in basic and acidic residues. The residue at position 271 (Ser-271) is a Phosphoserine. Thr-272 carries the post-translational modification Phosphothreonine. A phosphoserine mark is found at Ser-273 and Ser-275. Residues 274–283 (DSEEEGDDQE) show a composition bias toward acidic residues. Positions 287–302 (KRKGGRNFQTAHRRNM) are enriched in basic residues. The segment covering 305–349 (GQHEKEAADRKRKQEEQMETEQQNKDEGKKPEVKKVEKKRETSMD) has biased composition (basic and acidic residues). Coiled-coil stretches lie at residues 306–334 (QHEK…EGKK) and 371–395 (NRCI…KHTE). The interval 340-417 (VEKKRETSMD…VSQIIMEKST (78 aa)) is integrase-binding domain (IBD). Ser-434 carries the post-translational modification Phosphoserine. Thr-437 is modified (phosphothreonine). Residue Ser-443 is modified to Phosphoserine. Over residues 446-473 (EQRQHEEANKTKDQGKKGPNKKLDKEQT) the composition is skewed to basic and acidic residues. Positions 446–530 (EQRQHEEANK…ISLKDSTLDN (85 aa)) are disordered. Positions 474–494 (GSKTLNGGSDAPDSNQAQHNG) are enriched in polar residues. Basic and acidic residues predominate over residues 498–530 (EESKDKHEASSKKKPSNEERETEISLKDSTLDN). Citrulline is present on Arg-517. The residue at position 522 (Ser-522) is a Phosphoserine. A Phosphothreonine modification is found at Thr-527.

Belongs to the HDGF family. In terms of assembly, monomer. Interacts with IFRD1/PC4. Interacts (via IBD domain) with POGZ (via IBM motif) and CDCA7L (via IBM motifs). Interacts (via IBD domain) with KMT2A (via IBM motifs) with a moderate affinity whereas interacts with the KMT2A-MEN1 complex with a greater affinity; MEN1 enhances interaction of KMT2A with PSIP1. Interacts (via IBD domain) with IWS1 (via IBM motif), MED1 (via IBM motif) and DBF4 (via IBM motifs). (Microbial infection) Interacts (via IBD domain) with feline immunodeficiency virus (FIV) integrase (IN), determining its nuclear localization, its tight association with chromatin and its protection from the proteasome. In terms of processing, citrullinated by PADI4.

The protein resides in the nucleus. In terms of biological role, transcriptional coactivator involved in neuroepithelial stem cell differentiation and neurogenesis. Involved in particular in lens epithelial cell gene regulation and stress responses. May play an important role in lens epithelial to fiber cell terminal differentiation. May play a protective role during stress-induced apoptosis. The polypeptide is PC4 and SFRS1-interacting protein (PSIP1) (Felis catus (Cat)).